The sequence spans 392 residues: MSIKTIKDCDFAGKRALVRCDFNVPLKEGNITDDTRIRAALPTIEYLKSQGARVILMSHLGRPKGEKNLKYSLMPVAKRLSELLGQDVKMLPDCIGDEVATTVSCMKNGDIVLLENLRFYKEEEENCDAFVRKLSQNGDIFVNDAFGTAHRAHASTAGLAAYLPAVGGFLMEKEDEFLGKILRNPESPFVAIIGGSKVSSKIAVLESLLPKSNVMVIGGGMAYTFLKVEGYSIGQSLLENEYIDVASSFLKKAKELDVKVILPLDHVVASEFREDSIPEYVDSVDIPNDKVGMDIGEKTLRKIEEVLVSAKTVIWNGPLGVFEFNSFSKGTAKVAEYVASCSGITVVGGGDSVAAVNKFNLSEKITHVSTGGGASLEYLEGKVLPGIKVLEK.

Substrate is bound by residues 21–23 (DFN), R36, 59–62 (HLGR), R118, and R151. ATP is bound by residues K201, G292, E323, and 349-352 (GGDS).

This sequence belongs to the phosphoglycerate kinase family. Monomer.

The protein resides in the cytoplasm. It catalyses the reaction (2R)-3-phosphoglycerate + ATP = (2R)-3-phospho-glyceroyl phosphate + ADP. It participates in carbohydrate degradation; glycolysis; pyruvate from D-glyceraldehyde 3-phosphate: step 2/5. The chain is Phosphoglycerate kinase from Borrelia turicatae (strain 91E135).